Reading from the N-terminus, the 193-residue chain is Large ribosomal subunit protein uL5 (193 aa).

This sequence belongs to the universal ribosomal protein uL5 family. In terms of assembly, part of the 50S ribosomal subunit; part of the 5S rRNA/L5/L18/L25 subcomplex. Contacts the 5S rRNA and the P site tRNA. Forms a bridge to the 30S subunit in the 70S ribosome.

This is one of the proteins that bind and probably mediate the attachment of the 5S RNA into the large ribosomal subunit, where it forms part of the central protuberance. In the 70S ribosome it contacts protein S13 of the 30S subunit (bridge B1b), connecting the 2 subunits; this bridge is implicated in subunit movement. Contacts the P site tRNA; the 5S rRNA and some of its associated proteins might help stabilize positioning of ribosome-bound tRNAs. The sequence is that of Large ribosomal subunit protein uL5 from Novosphingobium aromaticivorans (strain ATCC 700278 / DSM 12444 / CCUG 56034 / CIP 105152 / NBRC 16084 / F199).